Consider the following 1327-residue polypeptide: P-glycoprotein 14 (1327 aa).

Residues 1–17 (MAPKDDPDNRGFDDQRR) are compositionally biased toward basic and acidic residues. The disordered stretch occupies residues 1-23 (MAPKDDPDNRGFDDQRRPSQRST). Residues 1–104 (MAPKDDPDNR…RYGKKFDYLL (104 aa)) are Cytoplasmic-facing. The helical transmembrane segment at 105 to 125 (LFIGTICAIISGVSQPILALV) threads the bilayer. The ABC transmembrane type-1 1 domain occupies 106–394 (FIGTICAIIS…ISPHMMVLLN (289 aa)). The Extracellular segment spans residues 126 to 151 (SGRVTNALLVYPPTSKQFRNKANENV). Residues 152 to 172 (YIFLGIGIFISITNFIQYMCF) form a helical membrane-spanning segment. Over 173-225 (QHCCTRVMAQMRHRFVYSVLRQNAGWFDKNHSGTITTKLNDSMERIREGIGDK) the chain is Cytoplasmic. Residues 226–246 (LGVLLRGFAMLIAAIVVAYIY) traverse the membrane as a helical segment. Position 247 (Glu247) is a topological domain, extracellular. The chain crosses the membrane as a helical span at residues 248–268 (WRLASMMLGVAPTCCICMSLL). Residues 269-331 (ARQMTSTTIK…KFAVWKGFWS (63 aa)) lie on the Cytoplasmic side of the membrane. A helical transmembrane segment spans residues 332 to 352 (GFFGGLFFFWLFSFLGCGMLY). The Extracellular segment spans residues 353 to 364 (GAYLLKVGIITT). Residues 365–385 (PGDVFIVVMSMLLGAYFLGLI) traverse the membrane as a helical segment. Residues 386–766 (SPHMMVLLNA…NAKGNYLYMF (381 aa)) are Cytoplasmic-facing. The ABC transporter 1 domain maps to 429–665 (VKFENVHFRY…GGRYFDLVKA (237 aa)). 464-471 (GHSGCGKS) contacts ATP. The segment at 671-721 (DPEATEEFEEEEIDLDDTSRSSRRSSMTSARSGSEAFRRGNSLNDSFSGSK) is disordered. The span at 673–686 (EATEEFEEEEIDLD) shows a compositional bias: acidic residues. Residues 694–704 (RSSMTSARSGS) show a composition bias toward low complexity. A compositionally biased stretch (polar residues) spans 711 to 721 (NSLNDSFSGSK). Residues 766-1053 (FLGTVFALIR…SAQYFPEFVK (288 aa)) form the ABC transmembrane type-1 2 domain. Residues 767–789 (LGTVFALIRGLELPALALIFGWV) form a helical membrane-spanning segment. Over 790–805 (FEGFTFVPYGGRMMHR) the chain is Extracellular. The helical transmembrane segment at 806-826 (MAMAVIAFASVGVGVWFSQLA) threads the bilayer. Over 827–886 (SSVLFAVVSENLSMRFRVQSFRNLLYQDASYFDNPAHAPGKLITRLASDAPNIKAVVDAR) the chain is Cytoplasmic. The helical transmembrane segment at 887-907 (MLQVIYALAAIIANIAIAFIY) threads the bilayer. Residues 908–910 (CWQ) are Extracellular-facing. The helical transmembrane segment at 911–931 (IGILGTSLILLLAFVMIGLAY) threads the bilayer. The Cytoplasmic portion of the chain corresponds to 932 to 996 (KISLMNVEQI…KGMIEAINYS (65 aa)). A helical transmembrane segment spans residues 997 to 1017 (LTQSFMYFMMCFTYAVGIRII). Topologically, residues 1018 to 1030 (YQGDKSSDDTFKG) are extracellular. Residues 1031 to 1051 (IIAMMLGAVAVMNSAQYFPEF) form a helical membrane-spanning segment. At 1052 to 1327 (VKAKTAAGML…KLIKKQDLAV (276 aa)) the chain is on the cytoplasmic side. The ABC transporter 2 domain maps to 1086–1322 (ILFENVKFSY…KGRYYKLIKK (237 aa)). 1121–1128 (GPSGSGKS) lines the ATP pocket.

It belongs to the ABC transporter superfamily. ABCB family. Multidrug resistance exporter (TC 3.A.1.201) subfamily. In terms of tissue distribution, expressed in pharyngeal epithelial cells that surround the anterior pharyngeal cuticle. Shares same expression pattern as sms-5.

Its subcellular location is the apical cell membrane. Contributes to the establishment of a polar lipid barrier to block small molecule passage into the pharyngeal cuticle. Probably exports polar lipids into the developing pharyngeal cuticle to protect against xenobiotic insult. Likely functions in the same pathway as sphingomyelin synthase sms-5. The sequence is that of P-glycoprotein 14 from Caenorhabditis elegans.